The following is a 205-amino-acid chain: Probable molybdenum cofactor guanylyltransferase (205 aa).

GTP is bound by residues 9-11, Lys-21, Asp-66, and Asp-95; that span reads LAG. Position 95 (Asp-95) interacts with Mg(2+).

This sequence belongs to the MobA family. Mg(2+) serves as cofactor.

The protein localises to the cytoplasm. The catalysed reaction is Mo-molybdopterin + GTP + H(+) = Mo-molybdopterin guanine dinucleotide + diphosphate. Its function is as follows. Transfers a GMP moiety from GTP to Mo-molybdopterin (Mo-MPT) cofactor (Moco or molybdenum cofactor) to form Mo-molybdopterin guanine dinucleotide (Mo-MGD) cofactor. The protein is Probable molybdenum cofactor guanylyltransferase of Pelotomaculum thermopropionicum (strain DSM 13744 / JCM 10971 / SI).